Here is a 455-residue protein sequence, read N- to C-terminus: Probable circularly permuted 1,3-beta-glucanase TOS1 (455 aa).

The signal sequence occupies residues 1–23 (MLQKLSMTALVGLFSSVVSLVNA). The interval 158–221 (TADSTNTVVG…SSSSSSNTNG (64 aa)) is disordered. Residues 172-189 (SSYTKDSTVLSSSAQAVE) show a composition bias toward polar residues. The segment covering 190-219 (TSESQSSISSSKTTSSAAAASSSSSSSSNT) has biased composition (low complexity). An N-linked (GlcNAc...) asparagine glycan is attached at asparagine 236. Positions 372–377 (EMDLFE) match the ExDxxE motif motif. A glycan (N-linked (GlcNAc...) asparagine) is linked at asparagine 417.

The protein belongs to the PGA52 family.

It is found in the secreted. The protein localises to the cell wall. It carries out the reaction Hydrolysis of (1-&gt;3)-beta-D-glucosidic linkages in (1-&gt;3)-beta-D-glucans.. Its function is as follows. Probable circularly permuted 1,3-beta-glucanase involved in cell wall modification through beta-1,3-glucan network alterations such as increased branching or remodeling. This chain is Probable circularly permuted 1,3-beta-glucanase TOS1, found in Saccharomyces cerevisiae (strain ATCC 204508 / S288c) (Baker's yeast).